A 221-amino-acid polypeptide reads, in one-letter code: Glutathione S-transferase (221 aa).

Position 1 is an N-acetylmethionine (Met-1). Ala-2 is modified (N-acetylalanine; in Glutathione S-transferase, N-terminally processed). Positions 3 to 82 constitute a GST N-terminal domain; that stretch reads GEQNIKYFNI…YIAEKYNLLG (80 aa). Glutathione is bound by residues Tyr-9, Lys-45, 53-54, and 66-67; these read QV and QT. One can recognise a GST C-terminal domain in the interval 84–208; it reads DMKEHAQIIM…PGSKRKPVPD (125 aa).

The protein belongs to the GST superfamily. Alpha family. Homodimer or heterodimer of GSTA1 and GSTA2.

It localises to the cytoplasm. The enzyme catalyses RX + glutathione = an S-substituted glutathione + a halide anion + H(+). The catalysed reaction is prostaglandin A2 + glutathione = prostaglandin A2-S-(R)-glutathione. It carries out the reaction prostaglandin J2 + glutathione = prostaglandin J2-S-(R)-glutathione. It catalyses the reaction (13S)-hydroperoxy-(9Z,11E)-octadecadienoate + 2 glutathione = (13S)-hydroxy-(9Z,11E)-octadecadienoate + glutathione disulfide + H2O. The enzyme catalyses androst-5-ene-3,17-dione = androst-4-ene-3,17-dione. Glutathione S-transferase that catalyzes the nucleophilic attack of the sulfur atom of glutathione on the electrophilic groups of a wide range of exogenous and endogenous compounds. Involved in the formation of glutathione conjugates of both prostaglandin A2 (PGA2) and prostaglandin J2 (PGJ2). It also catalyzes the isomerization of D5-androstene-3,17-dione (AD) into D4-androstene-3,17-dione and may therefore play an important role in hormone biosynthesis. Through its glutathione-dependent peroxidase activity toward the fatty acid hydroperoxide (13S)-hydroperoxy-(9Z,11E)-octadecadienoate/13-HPODE it is also involved in the metabolism of oxidized linoleic acid. This chain is Glutathione S-transferase, found in Antechinus stuartii (Brown marsupial mouse).